The primary structure comprises 193 residues: Acyl carrier protein phosphodiesterase (193 aa).

The protein belongs to the AcpH family.

It carries out the reaction holo-[ACP] + H2O = apo-[ACP] + (R)-4'-phosphopantetheine + H(+). Functionally, converts holo-ACP to apo-ACP by hydrolytic cleavage of the phosphopantetheine prosthetic group from ACP. The chain is Acyl carrier protein phosphodiesterase from Yersinia pestis.